Consider the following 597-residue polypeptide: Arginine--tRNA ligase (597 aa).

A 'HIGH' region motif is present at residues 125–135; the sequence is PNTNKPLHLGH.

This sequence belongs to the class-I aminoacyl-tRNA synthetase family. As to quaternary structure, monomer.

It localises to the cytoplasm. It carries out the reaction tRNA(Arg) + L-arginine + ATP = L-arginyl-tRNA(Arg) + AMP + diphosphate. In Porphyromonas gingivalis (strain ATCC 33277 / DSM 20709 / CIP 103683 / JCM 12257 / NCTC 11834 / 2561), this protein is Arginine--tRNA ligase.